We begin with the raw amino-acid sequence, 309 residues long: Ornithine carbamoyltransferase (309 aa).

Carbamoyl phosphate-binding positions include 57 to 60 (STRT), glutamine 84, arginine 108, and 135 to 138 (HPCQ). L-ornithine contacts are provided by residues asparagine 166, aspartate 226, and 230 to 231 (SM). Carbamoyl phosphate is bound by residues 265 to 266 (CL) and arginine 293.

Belongs to the aspartate/ornithine carbamoyltransferase superfamily. OTCase family.

It is found in the cytoplasm. It catalyses the reaction carbamoyl phosphate + L-ornithine = L-citrulline + phosphate + H(+). Its pathway is amino-acid biosynthesis; L-arginine biosynthesis; L-arginine from L-ornithine and carbamoyl phosphate: step 1/3. Its function is as follows. Reversibly catalyzes the transfer of the carbamoyl group from carbamoyl phosphate (CP) to the N(epsilon) atom of ornithine (ORN) to produce L-citrulline. The chain is Ornithine carbamoyltransferase from Rhizorhabdus wittichii (strain DSM 6014 / CCUG 31198 / JCM 15750 / NBRC 105917 / EY 4224 / RW1) (Sphingomonas wittichii).